We begin with the raw amino-acid sequence, 123 residues long: Snaclec echicetin subunit beta (123 aa).

One can recognise a C-type lectin domain in the interval 1–121; the sequence is NCLPDWSVYE…SGEFYFVCKC (121 aa). 3 cysteine pairs are disulfide-bonded: Cys2-Cys13, Cys30-Cys119, and Cys96-Cys111.

Belongs to the snaclec family. As to quaternary structure, heterodimer of subunits alpha and beta; disulfide-linked. Forms an active complex with the pentameric immunoglobuline Mkappa (IgMkappa). As to expression, expressed by the venom gland.

Its subcellular location is the secreted. Echicetin itself inhibits aggregation of washed platelets induced by vWF, thrombin or alboaggregin-A. However, when complexed with the pentameric plasma immunoglobulin Mkappa (IgMkappa), echicetin binds specifically to GPIb and activates platelets. This is caused by P-selectin expression and activation of alpha-IIb/beta-3 as well as tyrosine phosphorylation of several signal transduction molecules, including p53/56(LYN), p64, p72(SYK), p70 to p90, and p120. In vivo, it induces thrombocytopenia when injected into mice, probably accounting of activation of platelets rather than inhibition. This Echis carinatus sochureki (Saw-scaled viper) protein is Snaclec echicetin subunit beta.